The primary structure comprises 465 residues: Asparagine--tRNA ligase (465 aa).

It belongs to the class-II aminoacyl-tRNA synthetase family. Homodimer.

Its subcellular location is the cytoplasm. It catalyses the reaction tRNA(Asn) + L-asparagine + ATP = L-asparaginyl-tRNA(Asn) + AMP + diphosphate + H(+). The chain is Asparagine--tRNA ligase from Clostridium perfringens (strain ATCC 13124 / DSM 756 / JCM 1290 / NCIMB 6125 / NCTC 8237 / Type A).